Here is a 526-residue protein sequence, read N- to C-terminus: Rho guanine nucleotide exchange factor 3 (526 aa).

The disordered stretch occupies residues 20–40 (ELPPASGPAKDAEEPSNKRVK). 2 positions are modified to phosphoserine: serine 47 and serine 70. The 183-residue stretch at 122 to 304 (KRQEAIFELS…QGIVAEINTK (183 aa)) folds into the DH domain. The PH domain maps to 291-449 (INIIQGIVAE…WLNCIRQAKE (159 aa)). Residues 464–526 (EGSFLNPTTG…GNSRHGESNV (63 aa)) form a disordered region. Polar residues predominate over residues 466 to 475 (SFLNPTTGSR).

Interacts with RHOA and RHOB. As to expression, widely expressed. Highest levels are found in adult brain and skeletal muscle. Lower levels are found in heart and kidney.

Its subcellular location is the cytoplasm. Its function is as follows. Acts as a guanine nucleotide exchange factor (GEF) for RhoA and RhoB GTPases. This chain is Rho guanine nucleotide exchange factor 3 (ARHGEF3), found in Homo sapiens (Human).